The chain runs to 208 residues: MELKVINTAGAETGEVISLDDKVFAAKVSEHAVYLDVKSLLANKRQGTHKVKNRSEVRGGGKKPYRQKGTGHARQGSSRSGLMSGGGSIFGPQPHGYDLKVNRKIKRLARRSALSSKAGEGRIIVIEDFTFEQIKTRQFADILKNLGLDQKKTLVLLPEHNEIINRSGRNIPVLNIRVADQASTYDILDCQTVVMQKAAVKKIEETLA.

The segment at 45 to 84 (RQGTHKVKNRSEVRGGGKKPYRQKGTGHARQGSSRSGLMS) is disordered. The segment covering 60–71 (GGKKPYRQKGTG) has biased composition (basic residues).

This sequence belongs to the universal ribosomal protein uL4 family. As to quaternary structure, part of the 50S ribosomal subunit.

One of the primary rRNA binding proteins, this protein initially binds near the 5'-end of the 23S rRNA. It is important during the early stages of 50S assembly. It makes multiple contacts with different domains of the 23S rRNA in the assembled 50S subunit and ribosome. Functionally, forms part of the polypeptide exit tunnel. The polypeptide is Large ribosomal subunit protein uL4 (Prosthecochloris aestuarii (strain DSM 271 / SK 413)).